We begin with the raw amino-acid sequence, 158 residues long: Transcriptional regulator MraZ (158 aa).

SpoVT-AbrB domains lie at Lys7–Val66 and Leu95–Lys138.

The protein belongs to the MraZ family. Forms oligomers.

The protein localises to the cytoplasm. It localises to the nucleoid. This chain is Transcriptional regulator MraZ, found in Prosthecochloris aestuarii (strain DSM 271 / SK 413).